Here is a 285-residue protein sequence, read N- to C-terminus: 2,3,4,5-tetrahydropyridine-2,6-dicarboxylate N-succinyltransferase (285 aa).

Substrate is bound by residues R111 and D148.

The protein belongs to the transferase hexapeptide repeat family. As to quaternary structure, homotrimer.

Its subcellular location is the cytoplasm. The enzyme catalyses (S)-2,3,4,5-tetrahydrodipicolinate + succinyl-CoA + H2O = (S)-2-succinylamino-6-oxoheptanedioate + CoA. It participates in amino-acid biosynthesis; L-lysine biosynthesis via DAP pathway; LL-2,6-diaminopimelate from (S)-tetrahydrodipicolinate (succinylase route): step 1/3. The protein is 2,3,4,5-tetrahydropyridine-2,6-dicarboxylate N-succinyltransferase of Allorhizobium ampelinum (strain ATCC BAA-846 / DSM 112012 / S4) (Agrobacterium vitis (strain S4)).